A 672-amino-acid chain; its full sequence is Protein OS-9 (672 aa).

A signal peptide spans 1-26; that stretch reads MAAEVLLSSLLGLLFLGLLLPARLTG. Positions 108–230 constitute an MRH domain; that stretch reads APCLLKTKDW…TIRTSRLCPH (123 aa). Cysteine 110 and cysteine 123 are oxidised to a cystine. Positions 117, 118, and 130 each coordinate a mannooligosaccharide derivative. Asparagine 177 is a glycosylation site (N-linked (GlcNAc...) asparagine). 2 disulfides stabilise this stretch: cysteine 181-cysteine 216 and cysteine 196-cysteine 228. The a mannooligosaccharide derivative site is built by aspartate 182, arginine 188, glutamate 212, and tyrosine 218. Disordered stretches follow at residues 261-355, 372-452, 511-548, and 637-672; these read RQAE…NVQV, KAAE…LLPS, ENQS…RVRV, and EANK…EFDF. Composition is skewed to basic and acidic residues over residues 263–281, 294–310, 320–338, 372–386, and 394–409; these read AESK…DTDR, PKKE…ESEL, AAAR…HEAA, KAAE…REQP, and PQRE…KDGE. Acidic residues predominate over residues 414–435; it reads MEEEDGDDEEEEEEEEEDEEEQ. The span at 637–652 shows a compositional bias: basic and acidic residues; it reads EANKERQRQSELESNY. Over residues 663 to 672 the composition is skewed to acidic residues; it reads DTGDLDEFDF.

It belongs to the OS-9 family. Component of the HRD1 complex, which comprises at least SYNV1/HRD1, DERL1/2, FAM8A1, HERPUD1/HERP, OS9, SEL1L and UBE2J1. FAM8A1 is stabilized by interaction with SYNV1, which prevents its proteasomal degradation. OS9 and UBE2J1 recruitment to the complex may be mediated by SEL1L. Through this complex, may interact with ERLEC1 and HSPA5. Interacts (via C-terminus) with CPNE6 (via second C2 domain); this interaction occurs in a calcium-dependent manner in vitro. Interacts with CREB3. Post-translationally, N-glycosylated. Intramolecular disulfide bonds.

Its subcellular location is the endoplasmic reticulum lumen. Its function is as follows. Lectin component of the HRD1 complex, which functions in endoplasmic reticulum (ER) quality control and ER-associated degradation (ERAD). Specifically recognizes and binds improperly folded glycoproteins as well as hyperglycosylated proteins, retain them in the ER, and transfers them to the ubiquitination machinery and promote their degradation. Possible targets include TRPV4 as well as hyperglycosylated HSP90B1. The chain is Protein OS-9 (Os9) from Mus musculus (Mouse).